A 227-amino-acid polypeptide reads, in one-letter code: tRNA (guanine-N(1)-)-methyltransferase (227 aa).

Residues Gly110 and 129-134 (IGDYVL) contribute to the S-adenosyl-L-methionine site.

This sequence belongs to the RNA methyltransferase TrmD family. As to quaternary structure, homodimer.

The protein localises to the cytoplasm. The catalysed reaction is guanosine(37) in tRNA + S-adenosyl-L-methionine = N(1)-methylguanosine(37) in tRNA + S-adenosyl-L-homocysteine + H(+). Functionally, specifically methylates guanosine-37 in various tRNAs. The chain is tRNA (guanine-N(1)-)-methyltransferase from Mycoplasmopsis synoviae (strain 53) (Mycoplasma synoviae).